A 116-amino-acid polypeptide reads, in one-letter code: uncharacterized protein (116 aa).

2 consecutive transmembrane segments (helical) span residues 24–44 (VPFA…VLTA) and 70–90 (VILT…IILS).

It localises to the membrane. This is an uncharacterized protein from Saccharomyces cerevisiae (strain ATCC 204508 / S288c) (Baker's yeast).